Here is a 30-residue protein sequence, read N- to C-terminus: U-actitoxin-Bcg2a (30 aa).

Cys7 and Cys27 are disulfide-bonded.

Its subcellular location is the secreted. It is found in the nematocyst. Functionally, possible voltage-gated potassium channel (Kv) blocker. The chain is U-actitoxin-Bcg2a from Bunodosoma cangicum (Sea anemone).